The following is a 358-amino-acid chain: 5-amino-6-(D-ribitylamino)uracil--L-tyrosine 4-hydroxyphenyl transferase 2 (358 aa).

In terms of domain architecture, Radical SAM core spans valine 45–arginine 292. Cysteine 59, cysteine 63, and cysteine 66 together coordinate [4Fe-4S] cluster.

It belongs to the radical SAM superfamily. CofH family. Consists of two subunits, CofG and CofH. The cofactor is [4Fe-4S] cluster.

It carries out the reaction 5-amino-6-(D-ribitylamino)uracil + L-tyrosine + S-adenosyl-L-methionine = 5-amino-5-(4-hydroxybenzyl)-6-(D-ribitylimino)-5,6-dihydrouracil + 2-iminoacetate + 5'-deoxyadenosine + L-methionine + H(+). It functions in the pathway cofactor biosynthesis; coenzyme F0 biosynthesis. Catalyzes the radical-mediated synthesis of 5-amino-5-(4-hydroxybenzyl)-6-(D-ribitylimino)-5,6-dihydrouracil from 5-amino-6-(D-ribitylamino)uracil and L-tyrosine. This is 5-amino-6-(D-ribitylamino)uracil--L-tyrosine 4-hydroxyphenyl transferase 2 from Methanococcus maripaludis (strain DSM 14266 / JCM 13030 / NBRC 101832 / S2 / LL).